The primary structure comprises 111 residues: Large ribosomal subunit protein uL23 (111 aa).

This sequence belongs to the universal ribosomal protein uL23 family. As to quaternary structure, part of the 50S ribosomal subunit. Contacts protein L29, and trigger factor when it is bound to the ribosome.

One of the early assembly proteins it binds 23S rRNA. One of the proteins that surrounds the polypeptide exit tunnel on the outside of the ribosome. Forms the main docking site for trigger factor binding to the ribosome. The polypeptide is Large ribosomal subunit protein uL23 (Nitrosomonas europaea (strain ATCC 19718 / CIP 103999 / KCTC 2705 / NBRC 14298)).